We begin with the raw amino-acid sequence, 94 residues long: Small ribosomal subunit protein bS18 (94 aa).

A compositionally biased stretch (polar residues) spans 1-11 (MANERPTSQQR). A disordered region spans residues 1–24 (MANERPTSQQRPAGGPRKRRPFQR).

Belongs to the bacterial ribosomal protein bS18 family. As to quaternary structure, part of the 30S ribosomal subunit. Forms a tight heterodimer with protein bS6.

In terms of biological role, binds as a heterodimer with protein bS6 to the central domain of the 16S rRNA, where it helps stabilize the platform of the 30S subunit. In Pelobacter propionicus (strain DSM 2379 / NBRC 103807 / OttBd1), this protein is Small ribosomal subunit protein bS18.